The following is a 188-amino-acid chain: Antitoxin SocA (188 aa).

Interacts with cognate toxin SocB and with ClpX.

Antitoxin component of an atypical type II toxin-antitoxin (TA) system. Unlike most type II TA systems, neutralizes the toxic activity of cognate toxin SocB by acting as an adapter to promote its degradation by ClpXP; degradation is dependent on the N-terminus of ClpX. This is Antitoxin SocA from Caulobacter vibrioides (strain NA1000 / CB15N) (Caulobacter crescentus).